The primary structure comprises 600 residues: Aspartate--tRNA(Asp/Asn) ligase (600 aa).

Glu-187 contacts L-aspartate. Residues 211 to 214 (QIFK) are aspartate. L-aspartate-binding residues include Arg-233 and His-463. ATP is bound at residue 233–235 (RDE). Residue Glu-497 participates in ATP binding. Position 504 (Arg-504) interacts with L-aspartate. 549 to 552 (GVDR) is a binding site for ATP.

This sequence belongs to the class-II aminoacyl-tRNA synthetase family. Type 1 subfamily. As to quaternary structure, homodimer.

It localises to the cytoplasm. It catalyses the reaction tRNA(Asx) + L-aspartate + ATP = L-aspartyl-tRNA(Asx) + AMP + diphosphate. Functionally, aspartyl-tRNA synthetase with relaxed tRNA specificity since it is able to aspartylate not only its cognate tRNA(Asp) but also tRNA(Asn). Reaction proceeds in two steps: L-aspartate is first activated by ATP to form Asp-AMP and then transferred to the acceptor end of tRNA(Asp/Asn). The sequence is that of Aspartate--tRNA(Asp/Asn) ligase from Wolbachia sp. subsp. Drosophila simulans (strain wRi).